An 81-amino-acid chain; its full sequence is Trefoil factor 1 (81 aa).

Positions 1–21 (MEHKVTCVLAMVLMLALSSLA) are cleaved as a signal peptide. Residue Gln22 is modified to Pyrrolidone carboxylic acid. Residues 26–69 (ETCAVIPRERINCGFPGVTAQQCKEKGCCFDDSVRGFPWCFRPL) form the P-type domain. Intrachain disulfides connect Cys28-Cys54, Cys38-Cys53, and Cys48-Cys65.

The protein localises to the secreted. In terms of biological role, stabilizer of the mucous gel overlying the gastrointestinal mucosa that provides a physical barrier against various noxious agents. The protein is Trefoil factor 1 (Tff1) of Rattus norvegicus (Rat).